A 155-amino-acid polypeptide reads, in one-letter code: MRIEKCWFCSSNIYQGHGTIYVRNDAKVFRFCRPKCRKLFARRVNPRKVKWTKISRKMANKELCNDAILTFEHRLNEPRMYDRAEAERTLSSIPRILEIRKRREDFFIKDRILTGQEMNKESDLKYIERHANLLEEEVAGEKQVAKAKKREAQTN.

Belongs to the eukaryotic ribosomal protein eL24 family.

The sequence is that of Probable ribosome biogenesis protein RLP24 (RPL24) from Encephalitozoon cuniculi (strain GB-M1) (Microsporidian parasite).